The sequence spans 1103 residues: Platelet-derived growth factor receptor beta (1103 aa).

A signal peptide spans 1–31 (MQVPGTMPAPVLKGQALWLPLLLMLSPQASG). Ig-like C2-type domains are found at residues 33–120 (LVIT…YIFV), 129–210 (PVDP…YSLQ), 214–309 (INVS…INVT), 331–403 (HRSR…HEDA), and 416–524 (PVRV…VTVV). Topologically, residues 33 to 532 (LVITPPGPEL…VVPHSLPFKV (500 aa)) are extracellular. 2 N-linked (GlcNAc...) asparagine glycosylation sites follow: Asn45 and Asn89. 2 disulfide bridges follow: Cys54-Cys100 and Cys149-Cys190. 2 N-linked (GlcNAc...) asparagine glycosylation sites follow: Asn215 and Asn230. A disulfide bond links Cys235 and Cys291. N-linked (GlcNAc...) asparagine glycosylation is found at Asn292, Asn307, Asn354, Asn371, Asn468, and Asn479. Residues Cys436 and Cys508 are joined by a disulfide bond. The chain crosses the membrane as a helical span at residues 533–553 (VVISAILALVVLTIISLIILI). The Cytoplasmic portion of the chain corresponds to 554–1103 (MLWQKKPRYE…PRAEAEDSFL (550 aa)). 3 positions are modified to phosphotyrosine; by autocatalysis: Tyr562, Tyr579, and Tyr581. One can recognise a Protein kinase domain in the interval 600 to 962 (LVLGRTLGSG…QLVLLLERLL (363 aa)). ATP contacts are provided by residues 606–614 (LGSGAFGQV) and Lys634. Residue Tyr686 is modified to Phosphotyrosine; by ABL1 and ABL2. Phosphotyrosine; by autocatalysis occurs at positions 716, 740, 751, 763, 771, 775, and 778. The active-site Proton acceptor is Asp826. At Tyr857 the chain carries Phosphotyrosine; by autocatalysis. Residues Tyr934 and Tyr970 each carry the phosphotyrosine; by ABL1 and ABL2 modification. 2 positions are modified to phosphotyrosine; by autocatalysis: Tyr1009 and Tyr1021. The tract at residues 1017 to 1103 (GDNDYIIPLP…PRAEAEDSFL (87 aa)) is disordered. The span at 1039 to 1059 (SSPSLASSTLNEVNTSSTISC) shows a compositional bias: polar residues. Over residues 1065-1075 (PQEEPEPEPEP) the composition is skewed to acidic residues. The segment covering 1076 to 1086 (QPEPQVVPEPP) has biased composition (pro residues).

Belongs to the protein kinase superfamily. Tyr protein kinase family. CSF-1/PDGF receptor subfamily. As to quaternary structure, interacts with homodimeric PDGFB and PDGFD, and with heterodimers formed by PDGFA and PDGFB. May also interact with homodimeric PDGFC. Monomer in the absence of bound ligand. Interaction with homodimeric PDGFB, heterodimers formed by PDGFA and PDGFB or homodimeric PDGFD, leads to receptor dimerization, where both PDGFRA homodimers and heterodimers with PDGFRB are observed. Interacts with SH2B2/APS. Interacts directly (tyrosine phosphorylated) with SHB. Interacts (tyrosine phosphorylated) with PIK3R1 and RASA1. Interacts (tyrosine phosphorylated) with CBL. Interacts (tyrosine phosphorylated) with SRC and SRC family kinases. Interacts (tyrosine phosphorylated) with PIK3C2B, maybe indirectly. Interacts (tyrosine phosphorylated) with SHC1, GRB7, GRB10 and NCK1. Interaction with GRB2 is mediated by SHC1. Interacts (via C-terminus) with NHERF1. In terms of processing, N-glycosylated. Ubiquitinated. After autophosphorylation, the receptor is polyubiquitinated, leading to its degradation. Post-translationally, autophosphorylated on tyrosine residues upon ligand binding. Autophosphorylation occurs in trans, i.e. one subunit of the dimeric receptor phosphorylates tyrosine residues on the other subunit. Phosphorylation at Tyr-579, and to a lesser degree, Tyr-581 is important for interaction with SRC. Phosphorylation at Tyr-716 is important for interaction with GRB2. Phosphorylation at Tyr-740 and Tyr-751 is important for interaction with PIK3R1. Phosphorylation at Tyr-751 is important for interaction with NCK1. Phosphorylation at Tyr-771 and Tyr-857 is important for interaction with RASA1/GAP. Phosphorylation at Tyr-857 is important for efficient phosphorylation of PLCG1 and PTPN11, resulting in increased phosphorylation of AKT1, MAPK1/ERK2 and/or MAPK3/ERK1, PDCD6IP/ALIX and STAM, and in increased cell proliferation. Phosphorylation at Tyr-1009 is important for interaction with PTPN11. Phosphorylation at Tyr-1009 and Tyr-1021 is important for interaction with PLCG1. Dephosphorylated by PTPRJ at Tyr-751, Tyr-857, Tyr-1009 and Tyr-1021. Dephosphorylated by PTPN2 at Tyr-579 and Tyr-1021.

The protein localises to the cell membrane. The protein resides in the cytoplasmic vesicle. It is found in the lysosome lumen. The catalysed reaction is L-tyrosyl-[protein] + ATP = O-phospho-L-tyrosyl-[protein] + ADP + H(+). Present in an inactive conformation in the absence of bound ligand. Binding of PDGFB and/or PDGFD leads to dimerization and activation by autophosphorylation on tyrosine residues. Tyrosine-protein kinase that acts as a cell-surface receptor for homodimeric PDGFB and PDGFD and for heterodimers formed by PDGFA and PDGFB, and plays an essential role in the regulation of embryonic development, cell proliferation, survival, differentiation, chemotaxis and migration. Plays an essential role in blood vessel development by promoting proliferation, migration and recruitment of pericytes and smooth muscle cells to endothelial cells. Plays a role in the migration of vascular smooth muscle cells and the formation of neointima at vascular injury sites. Required for normal development of the cardiovascular system. Required for normal recruitment of pericytes (mesangial cells) in the kidney glomerulus, and for normal formation of a branched network of capillaries in kidney glomeruli. Promotes rearrangement of the actin cytoskeleton and the formation of membrane ruffles. Binding of its cognate ligands - homodimeric PDGFB, heterodimers formed by PDGFA and PDGFB or homodimeric PDGFD -leads to the activation of several signaling cascades; the response depends on the nature of the bound ligand and is modulated by the formation of heterodimers between PDGFRA and PDGFRB. Phosphorylates PLCG1, PIK3R1, PTPN11, RASA1/GAP, CBL, SHC1 and NCK1. Activation of PLCG1 leads to the production of the cellular signaling molecules diacylglycerol and inositol 1,4,5-trisphosphate, mobilization of cytosolic Ca(2+) and the activation of protein kinase C. Phosphorylation of PIK3R1, the regulatory subunit of phosphatidylinositol 3-kinase, leads to the activation of the AKT1 signaling pathway. Phosphorylation of SHC1, or of the C-terminus of PTPN11, creates a binding site for GRB2, resulting in the activation of HRAS, RAF1 and down-stream MAP kinases, including MAPK1/ERK2 and/or MAPK3/ERK1. Promotes phosphorylation and activation of SRC family kinases. Promotes phosphorylation of PDCD6IP/ALIX and STAM. Receptor signaling is down-regulated by protein phosphatases that dephosphorylate the receptor and its down-stream effectors, and by rapid internalization of the activated receptor. This Canis lupus familiaris (Dog) protein is Platelet-derived growth factor receptor beta (PDGFRB).